Here is a 445-residue protein sequence, read N- to C-terminus: Argininosuccinate synthase (445 aa).

ATP-binding positions include 17-25 and Ala-43; that span reads AFSGGLDTS. L-citrulline is bound at residue Tyr-99. ATP-binding residues include Gly-129 and Thr-131. The L-aspartate site is built by Thr-131, Asn-135, and Asp-136. An L-citrulline-binding site is contributed by Asn-135. Position 136 (Asp-136) interacts with ATP. The L-citrulline site is built by Arg-139 and Ser-192. Asp-194 contacts ATP. The L-citrulline site is built by Thr-201, Glu-203, and Glu-280.

It belongs to the argininosuccinate synthase family. Type 2 subfamily. In terms of assembly, homotetramer.

It localises to the cytoplasm. It catalyses the reaction L-citrulline + L-aspartate + ATP = 2-(N(omega)-L-arginino)succinate + AMP + diphosphate + H(+). It participates in amino-acid biosynthesis; L-arginine biosynthesis; L-arginine from L-ornithine and carbamoyl phosphate: step 2/3. This Rhodopseudomonas palustris (strain ATCC BAA-98 / CGA009) protein is Argininosuccinate synthase.